The primary structure comprises 137 residues: 15 kDa protein A (137 aa).

An N-terminal signal peptide occupies residues 1 to 20; it reads MAGVWKVLVVLVGLAVVACA. Intrachain disulfides connect cysteine 77–cysteine 88 and cysteine 99–cysteine 116.

This sequence belongs to the cathelicidin family. As to expression, large granules of neutrophils.

It is found in the secreted. Its function is as follows. Binds to bacterial lipopolysaccharides (LPS), potentiates strongly the early antibacterial effects of BPI. Inhibits the late lethal action of BPI. In Oryctolagus cuniculus (Rabbit), this protein is 15 kDa protein A.